A 178-amino-acid polypeptide reads, in one-letter code: Cytochrome b6-f complex iron-sulfur subunit (178 aa).

The chain crosses the membrane as a helical span at residues 20-42; sequence LLTFGTVTGVALGALYPVAQYFT. Residues 71-161 enclose the Rieske domain; that stretch reads THPVGDRSLV…VSIEDDQVLV (91 aa). Positions 107, 109, 125, and 128 each coordinate [2Fe-2S] cluster. Residues Cys-112 and Cys-127 are joined by a disulfide bond.

The protein belongs to the Rieske iron-sulfur protein family. As to quaternary structure, the 4 large subunits of the cytochrome b6-f complex are cytochrome b6, subunit IV (17 kDa polypeptide, PetD), cytochrome f and the Rieske protein, while the 4 small subunits are PetG, PetL, PetM and PetN. The complex functions as a dimer. It depends on [2Fe-2S] cluster as a cofactor.

The protein localises to the cellular thylakoid membrane. The enzyme catalyses 2 oxidized [plastocyanin] + a plastoquinol + 2 H(+)(in) = 2 reduced [plastocyanin] + a plastoquinone + 4 H(+)(out). Its function is as follows. Component of the cytochrome b6-f complex, which mediates electron transfer between photosystem II (PSII) and photosystem I (PSI), cyclic electron flow around PSI, and state transitions. In Prochlorococcus marinus (strain NATL1A), this protein is Cytochrome b6-f complex iron-sulfur subunit.